The following is a 290-amino-acid chain: Protease HtpX (290 aa).

Transmembrane regions (helical) follow at residues 6–26 (LFLVTNLAVMLVLGVVLNILF) and 36–56 (ISGLLVFCAVFGFGGSFISLL). His-143 serves as a coordination point for Zn(2+). Glu-144 is a catalytic residue. His-147 is a binding site for Zn(2+). 2 consecutive transmembrane segments (helical) span residues 158–178 (LIQGVVNTFVMFFARIVAGVI) and 200–220 (ITVFVLEMLFGVLASIIVMWF). Residue Glu-225 participates in Zn(2+) binding.

Belongs to the peptidase M48B family. It depends on Zn(2+) as a cofactor.

The protein resides in the cell inner membrane. This chain is Protease HtpX, found in Aeromonas hydrophila subsp. hydrophila (strain ATCC 7966 / DSM 30187 / BCRC 13018 / CCUG 14551 / JCM 1027 / KCTC 2358 / NCIMB 9240 / NCTC 8049).